Reading from the N-terminus, the 261-residue chain is tRNA pseudouridine synthase A (261 aa).

Catalysis depends on Asp51, which acts as the Nucleophile. Tyr109 serves as a coordination point for substrate.

It belongs to the tRNA pseudouridine synthase TruA family. As to quaternary structure, homodimer.

It carries out the reaction uridine(38/39/40) in tRNA = pseudouridine(38/39/40) in tRNA. Its function is as follows. Formation of pseudouridine at positions 38, 39 and 40 in the anticodon stem and loop of transfer RNAs. The polypeptide is tRNA pseudouridine synthase A (Shewanella frigidimarina (strain NCIMB 400)).